Here is a 216-residue protein sequence, read N- to C-terminus: Probable nicotinate-nucleotide adenylyltransferase (216 aa).

The protein belongs to the NadD family.

The enzyme catalyses nicotinate beta-D-ribonucleotide + ATP + H(+) = deamido-NAD(+) + diphosphate. The protein operates within cofactor biosynthesis; NAD(+) biosynthesis; deamido-NAD(+) from nicotinate D-ribonucleotide: step 1/1. Its function is as follows. Catalyzes the reversible adenylation of nicotinate mononucleotide (NaMN) to nicotinic acid adenine dinucleotide (NaAD). The protein is Probable nicotinate-nucleotide adenylyltransferase of Geobacillus thermodenitrificans (strain NG80-2).